Consider the following 484-residue polypeptide: MTATATEHVAATSGATGRIARVIGPVVDVEFPADAIPSIYNALTTEITLNGETKTITFEVALHLGDNLIRAISLQATDGLVRGTNVVDTGSPITVPVGDGVKGHIFNVLGKPLDVDESEIQASDHWAIHRKAPAFATLEGSTEMLETGIKVIDLLTPYIKGGKIGLFGGAGVGKTVLIQEMITRVARNFGGTSVFAGVGERTREGNDLWVEMEEAGVLKDTALVFGQMDEPPGTRLRVALSALTMAEYFRDVQNQDVLLFIDNIFRFTQAGSEVSTLLGRMPSAVGYQPNLADEMGLLQERITSTKGHSITSMQAIYVPADDYTDPAPATTFAHLDATTELSREIASRGLYPAVDPLTSTSRILDPQYIGKDHYNTAVRVKQILQKNKELQDIIAILGVDELSEEDKIVVSRARRIQQFLSQNTYTAKQFTGVEGSTVSIKDTVEGFTAICDGELDHVAEQAFFNVGGLDDVERQWAKIQEQTK.

168–175 (GGAGVGKT) is a binding site for ATP.

It belongs to the ATPase alpha/beta chains family. As to quaternary structure, F-type ATPases have 2 components, CF(1) - the catalytic core - and CF(0) - the membrane proton channel. CF(1) has five subunits: alpha(3), beta(3), gamma(1), delta(1), epsilon(1). CF(0) has three main subunits: a(1), b(2) and c(9-12). The alpha and beta chains form an alternating ring which encloses part of the gamma chain. CF(1) is attached to CF(0) by a central stalk formed by the gamma and epsilon chains, while a peripheral stalk is formed by the delta and b chains.

It is found in the cell membrane. It catalyses the reaction ATP + H2O + 4 H(+)(in) = ADP + phosphate + 5 H(+)(out). Functionally, produces ATP from ADP in the presence of a proton gradient across the membrane. The catalytic sites are hosted primarily by the beta subunits. This Arthrobacter sp. (strain FB24) protein is ATP synthase subunit beta.